The chain runs to 220 residues: U1 small nuclear ribonucleoprotein C (220 aa).

The Matrin-type zinc-finger motif lies at 4 to 36 (FFCDYCDVYLTHDSISVRKAHNSGRNHLRNVVD). Residues 197 to 220 (PLGGFPAGAPLPGAPPGYGPPGAK) are disordered. Positions 208–220 (PGAPPGYGPPGAK) are enriched in pro residues.

It belongs to the U1 small nuclear ribonucleoprotein C family. U1 snRNP is composed of the 7 core Sm proteins B/B', D1, D2, D3, E, F and G that assemble in a heptameric protein ring on the Sm site of the small nuclear RNA to form the core snRNP, and at least 3 U1 snRNP-specific proteins U1-70K, U1-A and U1-C. U1-C interacts with U1 snRNA and the 5' splice-site region of the pre-mRNA.

The protein resides in the nucleus. Component of the spliceosomal U1 snRNP, which is essential for recognition of the pre-mRNA 5' splice-site and the subsequent assembly of the spliceosome. U1-C is directly involved in initial 5' splice-site recognition for both constitutive and regulated alternative splicing. The interaction with the 5' splice-site seems to precede base-pairing between the pre-mRNA and the U1 snRNA. Stimulates commitment or early (E) complex formation by stabilizing the base pairing of the 5' end of the U1 snRNA and the 5' splice-site region. The chain is U1 small nuclear ribonucleoprotein C from Tuber melanosporum (strain Mel28) (Perigord black truffle).